Reading from the N-terminus, the 188-residue chain is Large ribosomal subunit protein uL5 (188 aa).

The protein belongs to the universal ribosomal protein uL5 family. As to quaternary structure, part of the 50S ribosomal subunit; part of the 5S rRNA/L5/L18/L25 subcomplex. Contacts the 5S rRNA and the P site tRNA. Forms a bridge to the 30S subunit in the 70S ribosome.

Its function is as follows. This is one of the proteins that bind and probably mediate the attachment of the 5S RNA into the large ribosomal subunit, where it forms part of the central protuberance. In the 70S ribosome it contacts protein S13 of the 30S subunit (bridge B1b), connecting the 2 subunits; this bridge is implicated in subunit movement. Contacts the P site tRNA; the 5S rRNA and some of its associated proteins might help stabilize positioning of ribosome-bound tRNAs. This Aquifex aeolicus (strain VF5) protein is Large ribosomal subunit protein uL5.